Consider the following 629-residue polypeptide: Probable potassium transport system protein Kup 3 (629 aa).

12 helical membrane passes run Leu20 to Phe40, Val54 to Val74, Pro106 to Thr126, Pro143 to Ile163, Ile171 to Ala191, Phe212 to Thr232, Trp253 to Leu273, Phe291 to Ile311, Ile343 to Phe363, Ala372 to Leu392, Ile400 to Ala420, and Phe425 to Ile445.

The protein belongs to the HAK/KUP transporter (TC 2.A.72) family.

Its subcellular location is the cell inner membrane. The enzyme catalyses K(+)(in) + H(+)(in) = K(+)(out) + H(+)(out). Transport of potassium into the cell. Likely operates as a K(+):H(+) symporter. The sequence is that of Probable potassium transport system protein Kup 3 from Legionella pneumophila (strain Corby).